The primary structure comprises 421 residues: Dihydroorotase (421 aa).

Zn(2+) is bound by residues histidine 59 and histidine 61. Residues 61–63 (HLR) and asparagine 93 each bind substrate. Zn(2+) is bound by residues aspartate 150, histidine 177, and histidine 230. Asparagine 276 contributes to the substrate binding site. Aspartate 303 serves as a coordination point for Zn(2+). The active site involves aspartate 303. Histidine 307 provides a ligand contact to substrate.

It belongs to the metallo-dependent hydrolases superfamily. DHOase family. Class I DHOase subfamily. Requires Zn(2+) as cofactor.

The enzyme catalyses (S)-dihydroorotate + H2O = N-carbamoyl-L-aspartate + H(+). The protein operates within pyrimidine metabolism; UMP biosynthesis via de novo pathway; (S)-dihydroorotate from bicarbonate: step 3/3. Its function is as follows. Catalyzes the reversible cyclization of carbamoyl aspartate to dihydroorotate. This Desulfotalea psychrophila (strain LSv54 / DSM 12343) protein is Dihydroorotase.